The chain runs to 135 residues: Type 3 secretion system stator protein (135 aa).

It belongs to the SctL stator family. As to quaternary structure, the core secretion machinery of the T3SS is composed of approximately 20 different proteins, including cytoplasmic components, a base, an export apparatus and a needle. This subunit is part of the cytosolic complex.

It is found in the cytoplasm. Functionally, component of the type III secretion system (T3SS), also called injectisome, which is used to inject bacterial effector proteins into eukaryotic host cells. Acts as a regulator of the HrcN/SctN ATPase activity. In Rhizobium fredii (Sinorhizobium fredii), this protein is Type 3 secretion system stator protein.